Consider the following 157-residue polypeptide: Peptide methionine sulfoxide reductase MsrA (157 aa).

Residue C10 is part of the active site.

This sequence belongs to the MsrA Met sulfoxide reductase family.

The enzyme catalyses L-methionyl-[protein] + [thioredoxin]-disulfide + H2O = L-methionyl-(S)-S-oxide-[protein] + [thioredoxin]-dithiol. It catalyses the reaction [thioredoxin]-disulfide + L-methionine + H2O = L-methionine (S)-S-oxide + [thioredoxin]-dithiol. Its function is as follows. Has an important function as a repair enzyme for proteins that have been inactivated by oxidation. Catalyzes the reversible oxidation-reduction of methionine sulfoxide in proteins to methionine. The chain is Peptide methionine sulfoxide reductase MsrA from Clostridium perfringens (strain SM101 / Type A).